The following is a 276-amino-acid chain: Urease accessory protein UreD (276 aa).

Belongs to the UreD family. UreD, UreF and UreG form a complex that acts as a GTP-hydrolysis-dependent molecular chaperone, activating the urease apoprotein by helping to assemble the nickel containing metallocenter of UreC. The UreE protein probably delivers the nickel.

Its subcellular location is the cytoplasm. Functionally, required for maturation of urease via the functional incorporation of the urease nickel metallocenter. This chain is Urease accessory protein UreD, found in Paracidovorax citrulli (strain AAC00-1) (Acidovorax citrulli).